The sequence spans 318 residues: tRNA dimethylallyltransferase (318 aa).

Glycine 16–serine 23 serves as a coordination point for ATP. Substrate is bound at residue threonine 18–serine 23. Interaction with substrate tRNA regions lie at residues aspartate 41 to glutamine 44 and glutamine 165 to arginine 169.

It belongs to the IPP transferase family. As to quaternary structure, monomer. The cofactor is Mg(2+).

It carries out the reaction adenosine(37) in tRNA + dimethylallyl diphosphate = N(6)-dimethylallyladenosine(37) in tRNA + diphosphate. Catalyzes the transfer of a dimethylallyl group onto the adenine at position 37 in tRNAs that read codons beginning with uridine, leading to the formation of N6-(dimethylallyl)adenosine (i(6)A). This is tRNA dimethylallyltransferase from Pelodictyon phaeoclathratiforme (strain DSM 5477 / BU-1).